We begin with the raw amino-acid sequence, 449 residues long: NADH-quinone oxidoreductase subunit H (449 aa).

The next 9 helical transmembrane spans lie at Trp-23–Phe-43, Ala-93–Ile-113, Val-137–Gly-157, Met-176–Ser-196, Leu-209–Glu-229, Ala-258–Leu-280, Tyr-300–Leu-320, Phe-332–Ala-352, and Leu-368–Ala-388. Residues Arg-427 to Thr-442 are compositionally biased toward polar residues. The segment at Arg-427 to Ile-449 is disordered.

The protein belongs to the complex I subunit 1 family. In terms of assembly, NDH-1 is composed of 14 different subunits. Subunits NuoA, H, J, K, L, M, N constitute the membrane sector of the complex.

The protein localises to the cell membrane. The catalysed reaction is a quinone + NADH + 5 H(+)(in) = a quinol + NAD(+) + 4 H(+)(out). Functionally, NDH-1 shuttles electrons from NADH, via FMN and iron-sulfur (Fe-S) centers, to quinones in the respiratory chain. The immediate electron acceptor for the enzyme in this species is believed to be ubiquinone. Couples the redox reaction to proton translocation (for every two electrons transferred, four hydrogen ions are translocated across the cytoplasmic membrane), and thus conserves the redox energy in a proton gradient. This subunit may bind ubiquinone. The polypeptide is NADH-quinone oxidoreductase subunit H (Nocardioides sp. (strain ATCC BAA-499 / JS614)).